Consider the following 149-residue polypeptide: MGIIAQNKISSLGMLFGAIALMMGIIHFSFGPFSAPPPTFESIVADKTAEIKRGLLAGIKGEKITTVEKKEDVDVDKILNQSGIALAIAALLCAFIGGMRKENRWGIRGALVFGGGTLAFHTLLFGIGIVCSILLIFLIFSFLTGGSLV.

Topologically, residues 1–8 (MGIIAQNK) are cytoplasmic. Residues 9–31 (ISSLGMLFGAIALMMGIIHFSFG) traverse the membrane as a helical segment. The Periplasmic portion of the chain corresponds to 32 to 77 (PFSAPPPTFESIVADKTAEIKRGLLAGIKGEKITTVEKKEDVDVDK). Residues 78-97 (ILNQSGIALAIAALLCAFIG) traverse the membrane as a helical segment. Residues 98-117 (GMRKENRWGIRGALVFGGGT) lie on the Cytoplasmic side of the membrane. The chain crosses the membrane as a helical span at residues 118-140 (LAFHTLLFGIGIVCSILLIFLIF). Residues 141-149 (SFLTGGSLV) are Periplasmic-facing.

The protein resides in the cell inner membrane. The polypeptide is Inner membrane protein YidI (yidI) (Escherichia coli (strain K12)).